The sequence spans 320 residues: MASILPASNRSMRPDKNTYERKRSVYVKNPYLEGMDEDILYHLDLGTKTHNLPAMFGDVKFVCVGGSPNRMKAFAQFMHKELRLEGDGEDIEDICAGTDRYCMFKTGPVLSVSHGMGIPSISIMLHELIKLLHHAHCCDVTIIRIGTSGGIGIAPGSVVITDTAVDSFFKPRFEQVILDNVVTRSTELDKELANDLFNCSREIPNVPTLIGHTMCTYDFYEGQGRLDGALCSFSREKKLDYLKRAYRAGVRNIEMESTVFAAMCGLCGLRAAVVCVTLLDRLESDQINLSHDVLVEYQQRPQLLISNFIKKQLGLCDQMS.

Phosphate-binding positions include G66, R100, and 144–147 (RIGT). Residues C95 and C102 are joined by a disulfide bond. Uridine-binding positions include 148–149 (SG) and 223–225 (QGR).

Belongs to the PNP/UDP phosphorylase family. Homodimer. As to expression, liver specific.

It carries out the reaction uridine + phosphate = alpha-D-ribose 1-phosphate + uracil. The enzyme catalyses 2'-deoxyuridine + phosphate = 2-deoxy-alpha-D-ribose 1-phosphate + uracil. It functions in the pathway pyrimidine metabolism; UMP biosynthesis via salvage pathway; uracil from uridine (phosphorylase route): step 1/1. Its activity is regulated as follows. A conditional disulfide bridge can form within the protein that dislocates a critical phosphate-coordinating arginine Arg-100 away from the active site, disabling the enzyme. In terms of biological role, catalyzes the reversible phosphorylytic cleavage of uridine to uracil and ribose-1-phosphate which can then be utilized as carbon and energy sources or in the rescue of pyrimidine bases for nucleotide synthesis. Shows broad substrate specificity and can also accept deoxyuridine and other analogous compounds. The polypeptide is Uridine phosphorylase 2 (Mus musculus (Mouse)).